A 1423-amino-acid polypeptide reads, in one-letter code: Guanine nucleotide exchange factor subunit RIC1 (1423 aa).

WD repeat units lie at residues 64–103 and 304–343; these read TQFGSYKQAEWRPDSTMIAVSTANGYILFFHITSTRGDKY and NKTGAVKLMRWSPDNSVVIVTWEYGGLSLWSVFGAQLICT. The segment covering 437-448 has biased composition (polar residues); it reads ASQTQNPRSSST. The tract at residues 437 to 463 is disordered; sequence ASQTQNPRSSSTHSEHKPSREKSPFAD. Over residues 449–460 the composition is skewed to basic and acidic residues; the sequence is HSEHKPSREKSP. Residues threonine 992 and threonine 996 each carry the phosphothreonine modification. Phosphoserine is present on residues serine 1015, serine 1017, serine 1019, serine 1037, and serine 1172. The interval 1355–1423 is disordered; the sequence is PDAFQPITMG…QDGTYDCSVS (69 aa). Polar residues predominate over residues 1379 to 1397; the sequence is GSSSHGSIPQGEVGSSNMV. Residues 1404–1413 show a composition bias toward acidic residues; it reads TAQAEEEEPF.

This sequence belongs to the RIC1 family. Forms a complex with RGP1; the interaction enhances RAB6A GTPase activity. Interacts (via central domain) with RGP1. Interacts with RAB6A; the interaction is direct with a preference for RAB6A-GDP. Interacts (via C-terminus domain) with RAB33B; the interaction is direct with a preference for RAB33B-GTP. Interacts with GJA1. As to expression, present in kidney and various cell lines (at protein level). Widely expressed at low level.

Its subcellular location is the cytoplasm. It is found in the cytosol. It localises to the membrane. The RIC1-RGP1 complex acts as a guanine nucleotide exchange factor (GEF), which activates RAB6A by exchanging bound GDP for free GTP, and may thereby be required for efficient fusion of endosome-derived vesicles with the Golgi compartment. The RIC1-RGP1 complex participates in the recycling of mannose-6-phosphate receptors. Required for phosphorylation and localization of GJA1. Is a regulator of procollagen transport and secretion, and is required for correct cartilage morphogenesis and development of the craniofacial skeleton. In Homo sapiens (Human), this protein is Guanine nucleotide exchange factor subunit RIC1.